The chain runs to 245 residues: Acetylglutamate kinase (245 aa).

Substrate contacts are provided by residues 41–42 (GG), arginine 63, and asparagine 156.

The protein belongs to the acetylglutamate kinase family. ArgB subfamily.

It is found in the cytoplasm. The catalysed reaction is N-acetyl-L-glutamate + ATP = N-acetyl-L-glutamyl 5-phosphate + ADP. The protein operates within amino-acid biosynthesis; L-arginine biosynthesis; N(2)-acetyl-L-ornithine from L-glutamate: step 2/4. Catalyzes the ATP-dependent phosphorylation of N-acetyl-L-glutamate. This is Acetylglutamate kinase from Streptococcus sanguinis (strain SK36).